A 290-amino-acid polypeptide reads, in one-letter code: Bifunctional protein FolD (290 aa).

Residues 165 to 167, Ser-190, and Ile-231 each bind NADP(+); that span reads GRS.

This sequence belongs to the tetrahydrofolate dehydrogenase/cyclohydrolase family. In terms of assembly, homodimer.

It carries out the reaction (6R)-5,10-methylene-5,6,7,8-tetrahydrofolate + NADP(+) = (6R)-5,10-methenyltetrahydrofolate + NADPH. It catalyses the reaction (6R)-5,10-methenyltetrahydrofolate + H2O = (6R)-10-formyltetrahydrofolate + H(+). It functions in the pathway one-carbon metabolism; tetrahydrofolate interconversion. Its function is as follows. Catalyzes the oxidation of 5,10-methylenetetrahydrofolate to 5,10-methenyltetrahydrofolate and then the hydrolysis of 5,10-methenyltetrahydrofolate to 10-formyltetrahydrofolate. This is Bifunctional protein FolD from Aromatoleum aromaticum (strain DSM 19018 / LMG 30748 / EbN1) (Azoarcus sp. (strain EbN1)).